The following is a 131-amino-acid chain: Large ribosomal subunit protein bL17 (131 aa).

It belongs to the bacterial ribosomal protein bL17 family. In terms of assembly, part of the 50S ribosomal subunit. Contacts protein L32.

The sequence is that of Large ribosomal subunit protein bL17 from Cupriavidus metallidurans (strain ATCC 43123 / DSM 2839 / NBRC 102507 / CH34) (Ralstonia metallidurans).